We begin with the raw amino-acid sequence, 143 residues long: Large ribosomal subunit protein uL11 (143 aa).

It belongs to the universal ribosomal protein uL11 family. As to quaternary structure, part of the ribosomal stalk of the 50S ribosomal subunit. Interacts with L10 and the large rRNA to form the base of the stalk. L10 forms an elongated spine to which L12 dimers bind in a sequential fashion forming a multimeric L10(L12)X complex. In terms of processing, one or more lysine residues are methylated.

Functionally, forms part of the ribosomal stalk which helps the ribosome interact with GTP-bound translation factors. This chain is Large ribosomal subunit protein uL11, found in Polynucleobacter necessarius subsp. necessarius (strain STIR1).